Reading from the N-terminus, the 490-residue chain is Nicotinate phosphoribosyltransferase (490 aa).

Histidine 206 bears the Phosphohistidine mark.

This sequence belongs to the NAPRTase family. Post-translationally, transiently phosphorylated on a His residue during the reaction cycle. Phosphorylation strongly increases the affinity for substrates and increases the rate of nicotinate D-ribonucleotide production. Dephosphorylation regenerates the low-affinity form of the enzyme, leading to product release.

It catalyses the reaction nicotinate + 5-phospho-alpha-D-ribose 1-diphosphate + ATP + H2O = nicotinate beta-D-ribonucleotide + ADP + phosphate + diphosphate. Its pathway is cofactor biosynthesis; NAD(+) biosynthesis; nicotinate D-ribonucleotide from nicotinate: step 1/1. In terms of biological role, catalyzes the synthesis of beta-nicotinate D-ribonucleotide from nicotinate and 5-phospho-D-ribose 1-phosphate at the expense of ATP. In Bacillus subtilis (strain 168), this protein is Nicotinate phosphoribosyltransferase (pncB).